Here is a 235-residue protein sequence, read N- to C-terminus: tRNA (guanine-N(1)-)-methyltransferase (235 aa).

S-adenosyl-L-methionine is bound by residues G112 and 132-137 (IGDYVI).

This sequence belongs to the RNA methyltransferase TrmD family. Homodimer.

The protein localises to the cytoplasm. It catalyses the reaction guanosine(37) in tRNA + S-adenosyl-L-methionine = N(1)-methylguanosine(37) in tRNA + S-adenosyl-L-homocysteine + H(+). Specifically methylates guanosine-37 in various tRNAs. This chain is tRNA (guanine-N(1)-)-methyltransferase, found in Anaplasma marginale (strain St. Maries).